The chain runs to 163 residues: uncharacterized protein (163 aa).

The Cytoplasmic portion of the chain corresponds to 1 to 33 (MKTLDKITNYDLFDFADEFLKFVPVFRPNPTVT). Residues 34–54 (CLFGNPLTNLLVNGTGAACFF) traverse the membrane as a helical segment. At 55–117 (EFCSLALIKV…SLGMALPDDD (63 aa)) the chain is on the extracellular side. The helical transmembrane segment at 118–138 (VLLSITFWFLCNSSFSILFVF) threads the bilayer. Over 139-163 (ELRIFLRTVNNLLVVFLSVLKRNDL) the chain is Cytoplasmic.

The protein resides in the membrane. This is an uncharacterized protein from Saccharomyces cerevisiae (strain ATCC 204508 / S288c) (Baker's yeast).